The sequence spans 283 residues: 4-diphosphocytidyl-2-C-methyl-D-erythritol kinase (283 aa).

Residue lysine 11 is part of the active site. 94–104 is a binding site for ATP; that stretch reads PVAAGLAGGSA. Aspartate 136 is a catalytic residue.

This sequence belongs to the GHMP kinase family. IspE subfamily.

The catalysed reaction is 4-CDP-2-C-methyl-D-erythritol + ATP = 4-CDP-2-C-methyl-D-erythritol 2-phosphate + ADP + H(+). The protein operates within isoprenoid biosynthesis; isopentenyl diphosphate biosynthesis via DXP pathway; isopentenyl diphosphate from 1-deoxy-D-xylulose 5-phosphate: step 3/6. Catalyzes the phosphorylation of the position 2 hydroxy group of 4-diphosphocytidyl-2C-methyl-D-erythritol. This Acetivibrio thermocellus (strain ATCC 27405 / DSM 1237 / JCM 9322 / NBRC 103400 / NCIMB 10682 / NRRL B-4536 / VPI 7372) (Clostridium thermocellum) protein is 4-diphosphocytidyl-2-C-methyl-D-erythritol kinase.